Here is a 1167-residue protein sequence, read N- to C-terminus: Rhoptry neck protein 2-like protein 2 (1167 aa).

The first 20 residues, 1 to 20 (MSSNLAFLSLSLAESTASLG), serve as a signal peptide directing secretion. Over 21–977 (KSLEETRTRL…WVAKRSRSRK (957 aa)) the chain is Cytoplasmic. The interval 55 to 94 (GPGLSVEGKQTEQMSRKSAEDTRASSLSSDPDDGRAAQLA) is disordered. Over residues 68–77 (MSRKSAEDTR) the composition is skewed to basic and acidic residues. The chain crosses the membrane as a helical span at residues 978 to 998 (LAIVSVLSLGLIFAYTLLSAL). Residues 999–1167 (DIAQFLTDSG…TPQRAQDGSR (169 aa)) lie on the Extracellular side of the membrane. The cysteines at positions 1015 and 1026 are disulfide-linked.

This sequence belongs to the apicomplexan parasites RON2 family.

The protein resides in the secreted. Its subcellular location is the host cell membrane. In terms of biological role, may play a role in host cell invasion. The sequence is that of Rhoptry neck protein 2-like protein 2 (RON2L2) from Toxoplasma gondii (strain ATCC 50611 / Me49).